Here is a 344-residue protein sequence, read N- to C-terminus: GTPase Obg (344 aa).

Positions 1 to 159 (MKFLDEAKVY…MWLILRLKLI (159 aa)) constitute an Obg domain. The OBG-type G domain occupies 160–327 (ADAGLVGLPN…ALRAIQAQLD (168 aa)). GTP-binding positions include 166 to 173 (GLPNAGKS), 191 to 195 (FTTLH), 212 to 215 (DIPG), 279 to 282 (SKAD), and 308 to 310 (SAA). Positions 173 and 193 each coordinate Mg(2+).

The protein belongs to the TRAFAC class OBG-HflX-like GTPase superfamily. OBG GTPase family. In terms of assembly, monomer. It depends on Mg(2+) as a cofactor.

The protein localises to the cytoplasm. An essential GTPase which binds GTP, GDP and possibly (p)ppGpp with moderate affinity, with high nucleotide exchange rates and a fairly low GTP hydrolysis rate. Plays a role in control of the cell cycle, stress response, ribosome biogenesis and in those bacteria that undergo differentiation, in morphogenesis control. This Methylorubrum extorquens (strain CM4 / NCIMB 13688) (Methylobacterium extorquens) protein is GTPase Obg.